The sequence spans 209 residues: Large ribosomal subunit protein uL3 (209 aa).

N5-methylglutamine is present on Gln-150.

The protein belongs to the universal ribosomal protein uL3 family. In terms of assembly, part of the 50S ribosomal subunit. Forms a cluster with proteins L14 and L19. In terms of processing, methylated by PrmB.

In terms of biological role, one of the primary rRNA binding proteins, it binds directly near the 3'-end of the 23S rRNA, where it nucleates assembly of the 50S subunit. The sequence is that of Large ribosomal subunit protein uL3 from Citrobacter koseri (strain ATCC BAA-895 / CDC 4225-83 / SGSC4696).